The sequence spans 308 residues: MEWLEITVRTPPEGVELVADIFQEIGTGGVVIEDPAVIFKYAGATCPEEWAVPESATADGLPRVKGYLPADGTQSKRLEELAAVLARLLPGPASAVSTRTVSEEDWANAWKKYYKPVRAGRRLVVKPSWEDYRAEEGDLVIEMDPGMAFGSGTHATTCLCLRLLEKYVRPGGTVYDVGTGSGVLAVAAARLGAGRVVAVDIDPLACRVAAGNAERNGVAGKVQVVQGNLLEKVEGRADLVVANIIADVIAAFAPEAAGALAPGGVLIASGIIEEKAGLVVCALEAAGLAVCERDEEGRWVALAARLKA.

S-adenosyl-L-methionine is bound by residues T157, G178, D200, and N243.

The protein belongs to the methyltransferase superfamily. PrmA family.

It localises to the cytoplasm. It catalyses the reaction L-lysyl-[protein] + 3 S-adenosyl-L-methionine = N(6),N(6),N(6)-trimethyl-L-lysyl-[protein] + 3 S-adenosyl-L-homocysteine + 3 H(+). Functionally, methylates ribosomal protein L11. The chain is Ribosomal protein L11 methyltransferase from Pelotomaculum thermopropionicum (strain DSM 13744 / JCM 10971 / SI).